The sequence spans 829 residues: Disintegrin and metalloproteinase domain-containing protein 23 (829 aa).

A signal peptide spans 1-55 (MKPPGSISRRPTLTGCSLPGASCGPGRCPAGPVPARAPPCRLLLVLLLLPALATS). Residues 56 to 283 (SRPRARGAAA…ELQWLRRRKR (228 aa)) constitute a propeptide that is removed on maturation. 4 N-linked (GlcNAc...) asparagine glycosylation sites follow: Asn72, Asn92, Asn97, and Asn260. The Extracellular portion of the chain corresponds to 284 to 789 (AVNPSRGVFE…EGPKGPSATN (506 aa)). A Peptidase M12B domain is found at 296 to 493 (KYLELMIVND…GGGACLFNRP (198 aa)). 3 cysteine pairs are disulfide-bonded: Cys405–Cys488, Cys447–Cys472, and Cys449–Cys456. A Disintegrin domain is found at 499–585 (PTECGNGYVE…QCPPNLHKQD (87 aa)). N-linked (GlcNAc...) asparagine glycans are attached at residues Asn544 and Asn545. A disulfide bridge connects residues Cys557 and Cys577. Residues Asn661 and Asn729 are each glycosylated (N-linked (GlcNAc...) asparagine). Residues 729-766 (NMSSCPLDSRGKVCSGHGVCSNEATCICDFTWAGTDCS) enclose the EGF-like domain. 3 disulfide bridges follow: Cys733/Cys748, Cys742/Cys754, and Cys756/Cys765. The helical transmembrane segment at 790-810 (LIIGSIAGAILVAAIVLGGTG) threads the bilayer. Over 811–829 (WGFKNVKKRRFDPTQQGPI) the chain is Cytoplasmic.

Can bind to LGI1 and LGI4. As to expression, brain specific.

The protein localises to the cell membrane. Its subcellular location is the secreted. Functionally, may play a role in cell-cell and cell-matrix interactions. This is a non-catalytic metalloprotease-like protein. The chain is Disintegrin and metalloproteinase domain-containing protein 23 (Adam23) from Mus musculus (Mouse).